A 278-amino-acid chain; its full sequence is 4-diphosphocytidyl-2-C-methyl-D-erythritol kinase (278 aa).

The active site involves Lys9. 89–99 (PVASGIGGGSA) contributes to the ATP binding site. Residue Asp128 is part of the active site.

This sequence belongs to the GHMP kinase family. IspE subfamily.

The enzyme catalyses 4-CDP-2-C-methyl-D-erythritol + ATP = 4-CDP-2-C-methyl-D-erythritol 2-phosphate + ADP + H(+). The protein operates within isoprenoid biosynthesis; isopentenyl diphosphate biosynthesis via DXP pathway; isopentenyl diphosphate from 1-deoxy-D-xylulose 5-phosphate: step 3/6. Functionally, catalyzes the phosphorylation of the position 2 hydroxy group of 4-diphosphocytidyl-2C-methyl-D-erythritol. In Cereibacter sphaeroides (strain KD131 / KCTC 12085) (Rhodobacter sphaeroides), this protein is 4-diphosphocytidyl-2-C-methyl-D-erythritol kinase.